Consider the following 110-residue polypeptide: UPF0060 membrane protein Psyr_3752 (110 aa).

Transmembrane regions (helical) follow at residues 5-25 (LWFF…WLWL), 28-48 (GKSA…ALLL), 59-79 (AYAA…GLVE), and 84-104 (LGTD…ILLG).

This sequence belongs to the UPF0060 family.

Its subcellular location is the cell inner membrane. The polypeptide is UPF0060 membrane protein Psyr_3752 (Pseudomonas syringae pv. syringae (strain B728a)).